Reading from the N-terminus, the 348-residue chain is Protein RecA (348 aa).

Residue Gly67–Thr74 participates in ATP binding.

Belongs to the RecA family.

It is found in the cytoplasm. Functionally, can catalyze the hydrolysis of ATP in the presence of single-stranded DNA, the ATP-dependent uptake of single-stranded DNA by duplex DNA, and the ATP-dependent hybridization of homologous single-stranded DNAs. It interacts with LexA causing its activation and leading to its autocatalytic cleavage. The polypeptide is Protein RecA (Kineococcus radiotolerans (strain ATCC BAA-149 / DSM 14245 / SRS30216)).